The following is a 360-amino-acid chain: Cysteine proteinase 2 (360 aa).

A signal peptide spans 1–19; that stretch reads MVPRRLFVLAVVVLADTAA. The propeptide at 20–142 is activation peptide; the sequence is VVNSGFADSN…NHRMRAAAVA (123 aa). Asparagine 125 carries an N-linked (GlcNAc...) asparagine glycan. Cystine bridges form between cysteine 164–cysteine 207 and cysteine 198–cysteine 240. Residue cysteine 167 is part of the active site. Asparagine 256 is a glycosylation site (N-linked (GlcNAc...) asparagine). Cysteine 298 and cysteine 348 are joined by a disulfide. Catalysis depends on residues histidine 307 and asparagine 327.

It belongs to the peptidase C1 family. Expressed at the onset of germination.

It is found in the vacuole. Its function is as follows. Involved in the degradation of the storage protein zein. May play a role in proteolysis during emergencies. The protein is Cysteine proteinase 2 (CCP2) of Zea mays (Maize).